We begin with the raw amino-acid sequence, 837 residues long: E3 ubiquitin-protein ligase bre-1 (837 aa).

Residues 1–33 (MMKRSNEGIGGENYASSPSDDGQQKRRKIQFEP) form a disordered region. The interval 1–313 (MMKRSNEGIG…AKEIENLRLE (313 aa)) is interaction with ubc-1. Coiled-coil stretches lie at residues 54-89 (TSKL…ESNF) and 185-253 (HKEL…KHMR). The interval 269–302 (GQSGGNGGATPSSSGTTNATEKKISAPDIPPSET) is disordered. Residues 277–287 (ATPSSSGTTNA) show a composition bias toward polar residues. Coiled coils occupy residues 300-397 (SETA…AFRS), 458-651 (DEMK…KAQT), and 677-763 (VQFK…NESV). Residues 785–824 (CPSCKTRPKDCIMLKCYHLFCETCIKTMYDTRQRKCPKCN) form an RING-type zinc finger.

Belongs to the BRE1 family. In terms of assembly, interacts with ubc-1. Interacts with mrg-1. In adult animals, expressed in oocytes, germ cells, pharyngeal and intestinal cells.

The protein resides in the nucleus. It carries out the reaction S-ubiquitinyl-[E2 ubiquitin-conjugating enzyme]-L-cysteine + [acceptor protein]-L-lysine = [E2 ubiquitin-conjugating enzyme]-L-cysteine + N(6)-ubiquitinyl-[acceptor protein]-L-lysine.. Its pathway is protein modification; protein ubiquitination. Its function is as follows. E3 ubiquitin-protein ligase that mediates monoubiquitination of 'Lys-117' of histone H2B. H2B 'Lys-117' ubiquitination gives a specific tag for epigenetic transcriptional activation and is also prerequisite for histone H3 'Lys-4' and 'Lys-79' methylation. Involved in regulating stem cell proliferative fate. This chain is E3 ubiquitin-protein ligase bre-1 (rfp-1), found in Caenorhabditis elegans.